The primary structure comprises 323 residues: Probable oxidoreductase patJ (323 aa).

Residues 291–323 (DQSANGVNGHATGVEAKKKQLGDMTRRRSGAQE) form a disordered region. Residues 305–316 (EAKKKQLGDMTR) are compositionally biased toward basic and acidic residues.

Belongs to the oxidoreductase OpS7 family.

The protein resides in the vacuole lumen. It localises to the cytoplasmic vesicle lumen. It functions in the pathway mycotoxin biosynthesis; patulin biosynthesis. In terms of biological role, probable oxidoreductase; part of the gene cluster that mediates the biosynthesis of patulin, an acetate-derived tetraketide mycotoxin produced by several fungal species that shows antimicrobial properties against several bacteria. PatJ acts with patO in the vacuole to convert gentisyl alcohol to isoepoxydon. The pathway begins with the synthesis of 6-methylsalicylic acid by the polyketide synthase (PKS) patK via condensation of acetate and malonate units. The 6-methylsalicylic acid decarboxylase patG then catalyzes the decarboxylation of 6-methylsalicylic acid to yield m-cresol (also known as 3-methylphenol). These first reactions occur in the cytosol. The intermediate m-cresol is then transported into the endoplasmic reticulum where the cytochrome P450 monooxygenase patH converts it to m-hydroxybenzyl alcohol, which is further converted to gentisyl alcohol by the cytochrome P450 monooxygenase patI. The oxidoreductases patJ and patO further convert gentisyl alcohol to isoepoxydon in the vacuole. PatN catalyzes then the transformation of isoepoxydon into phyllostine. The cluster protein patF is responsible for the conversion from phyllostine to neopatulin whereas the alcohol dehydrogenase patD converts neopatulin to E-ascladiol. The steps between isoepoxydon and E-ascladiol occur in the cytosol, and E-ascladiol is probably secreted to the extracellular space by one of the cluster-specific transporters patC or patM. Finally, the secreted patulin synthase patE catalyzes the conversion of E-ascladiol to patulin. This chain is Probable oxidoreductase patJ, found in Aspergillus clavatus (strain ATCC 1007 / CBS 513.65 / DSM 816 / NCTC 3887 / NRRL 1 / QM 1276 / 107).